A 142-amino-acid polypeptide reads, in one-letter code: Pleckstrin homology-like domain family A member 2 (142 aa).

Ser3 is subject to Phosphoserine. Residues 7–99 (VLREGELEKR…WNASITLALI (93 aa)) enclose the PH domain.

This sequence belongs to the PHLDA2 family.

Its subcellular location is the cytoplasm. It is found in the membrane. Functionally, plays a role in regulating placenta growth. May act via its PH domain that competes with other PH domain-containing proteins, thereby preventing their binding to membrane lipids. The polypeptide is Pleckstrin homology-like domain family A member 2 (PHLDA2) (Bos taurus (Bovine)).